The sequence spans 238 residues: Endonuclease V (238 aa).

Mg(2+) is bound by residues Asp-46 and Asp-116.

It belongs to the endonuclease V family. Requires Mg(2+) as cofactor.

Its subcellular location is the cytoplasm. It catalyses the reaction Endonucleolytic cleavage at apurinic or apyrimidinic sites to products with a 5'-phosphate.. Its function is as follows. DNA repair enzyme involved in the repair of deaminated bases. Selectively cleaves double-stranded DNA at the second phosphodiester bond 3' to a deoxyinosine leaving behind the intact lesion on the nicked DNA. The protein is Endonuclease V of Bacillus velezensis (strain DSM 23117 / BGSC 10A6 / LMG 26770 / FZB42) (Bacillus amyloliquefaciens subsp. plantarum).